The chain runs to 133 residues: Putative redox protein FMP46, mitochondrial (133 aa).

Residues 1–21 (MSFWKTLQRQPRTISLFTNDI) constitute a mitochondrion transit peptide. Residue cysteine 97 is part of the active site.

This sequence belongs to the FMP46 family.

The protein localises to the mitochondrion. Functionally, putative mitochondrial redox protein which could be involved in the reduction of small toxic molecules. The sequence is that of Putative redox protein FMP46, mitochondrial (FMP46) from Saccharomyces cerevisiae (strain ATCC 204508 / S288c) (Baker's yeast).